Consider the following 615-residue polypeptide: UvrABC system protein C (615 aa).

The 78-residue stretch at 14 to 91 folds into the GIY-YIG domain; that stretch reads TSPGCYIHKD…IKENKPKYNI (78 aa). The UVR domain occupies 196–231; the sequence is NKIIDELKGKMAAAAQTMEFERAAEYRDLIQAIGTL.

It belongs to the UvrC family. Interacts with UvrB in an incision complex.

The protein localises to the cytoplasm. Its function is as follows. The UvrABC repair system catalyzes the recognition and processing of DNA lesions. UvrC both incises the 5' and 3' sides of the lesion. The N-terminal half is responsible for the 3' incision and the C-terminal half is responsible for the 5' incision. This Streptococcus pneumoniae serotype 19F (strain G54) protein is UvrABC system protein C.